Reading from the N-terminus, the 238-residue chain is Probable RNA/DNA demethylase ALKBH6 (238 aa).

Positions proline 96–proline 227 constitute a Fe2OG dioxygenase domain. Residues asparagine 103 and tyrosine 105 each contribute to the 2-oxoglutarate site. 2 residues coordinate Fe cation: histidine 114 and aspartate 116. The segment at tyrosine 138–serine 161 is disordered. Histidine 182 contacts Fe cation. Positions 218 and 220 each coordinate 2-oxoglutarate.

Belongs to the alkB family. Interacts with VCPKMT. Requires Fe(2+) as cofactor. As to expression, widely expressed, with highest expression in testis and pancreas.

It is found in the cytoplasm. It localises to the nucleus. In terms of biological role, probable Fe(2+)/2-oxoglutarate-dependent dioxygenase involved in oxidative demethylation of nucleic acids. Binds nucleic acids with a preference for ssDNA or ssRNA to other types of DNAs. May play a role in nucleic acid damage repair. This chain is Probable RNA/DNA demethylase ALKBH6, found in Homo sapiens (Human).